A 662-amino-acid chain; its full sequence is ATP-dependent zinc metalloprotease FtsH (662 aa).

A compositionally biased stretch (basic and acidic residues) spans 1–15 (MSENPVKRPGKDGSR). A disordered region spans residues 1–35 (MSENPVKRPGKDGSRNKFKPVQEEGGTPGWFRSKG). At 1 to 39 (MSENPVKRPGKDGSRNKFKPVQEEGGTPGWFRSKGESPQ) the chain is on the cytoplasmic side. A helical membrane pass occupies residues 40-60 (GKFPGFLLFLMAGLLMLFVFL). The Periplasmic portion of the chain corresponds to 61 to 154 (RFFSGTDAPE…LKVEKGSSDL (94 aa)). The helical transmembrane segment at 155-175 (NTFLALFAPWIIFAALYFFLF) threads the bilayer. Residues 176–662 (RRMSGQNGAQ…QGALPNPVTA (487 aa)) are Cytoplasmic-facing. 250-257 (GPPGTGKT) provides a ligand contact to ATP. His-472 contributes to the Zn(2+) binding site. The active site involves Glu-473. His-476 and Asp-548 together coordinate Zn(2+).

In the central section; belongs to the AAA ATPase family. This sequence in the C-terminal section; belongs to the peptidase M41 family. Homohexamer. Zn(2+) is required as a cofactor.

It is found in the cell inner membrane. Functionally, acts as a processive, ATP-dependent zinc metallopeptidase for both cytoplasmic and membrane proteins. Plays a role in the quality control of integral membrane proteins. In Pelodictyon phaeoclathratiforme (strain DSM 5477 / BU-1), this protein is ATP-dependent zinc metalloprotease FtsH.